The primary structure comprises 943 residues: Isoleucine--tRNA ligase (943 aa).

The 'HIGH' region signature appears at 59–69 (PYANGQIHLGH). E577 is a binding site for L-isoleucyl-5'-AMP. A 'KMSKS' region motif is present at residues 618 to 622 (KMSKS). K621 serves as a coordination point for ATP. The Zn(2+) site is built by C906, C909, C926, and C929.

Belongs to the class-I aminoacyl-tRNA synthetase family. IleS type 1 subfamily. As to quaternary structure, monomer. It depends on Zn(2+) as a cofactor.

The protein resides in the cytoplasm. It catalyses the reaction tRNA(Ile) + L-isoleucine + ATP = L-isoleucyl-tRNA(Ile) + AMP + diphosphate. Functionally, catalyzes the attachment of isoleucine to tRNA(Ile). As IleRS can inadvertently accommodate and process structurally similar amino acids such as valine, to avoid such errors it has two additional distinct tRNA(Ile)-dependent editing activities. One activity is designated as 'pretransfer' editing and involves the hydrolysis of activated Val-AMP. The other activity is designated 'posttransfer' editing and involves deacylation of mischarged Val-tRNA(Ile). The polypeptide is Isoleucine--tRNA ligase (Xylella fastidiosa (strain M23)).